The primary structure comprises 423 residues: 26S proteasome regulatory subunit 6A homolog B (423 aa).

Serine 18 carries the phosphoserine modification. Glycine 211–threonine 218 contributes to the ATP binding site. Residues lysine 234, lysine 278, and lysine 415 each participate in a glycyl lysine isopeptide (Lys-Gly) (interchain with G-Cter in ubiquitin) cross-link.

It belongs to the AAA ATPase family. As to quaternary structure, component of the 19S regulatory particle (RP/PA700) base subcomplex of the 26S proteasome. The 26S proteasome is composed of a core protease (CP), known as the 20S proteasome, capped at one or both ends by the 19S regulatory particle (RP/PA700). The RP/PA700 complex is composed of at least 17 different subunits in two subcomplexes, the base and the lid, which form the portions proximal and distal to the 20S proteolytic core, respectively.

The protein resides in the cytoplasm. It localises to the nucleus. The 26S proteasome is involved in the ATP-dependent degradation of ubiquitinated proteins. The regulatory (or ATPase) complex confers ATP dependency and substrate specificity to the 26S complex. The chain is 26S proteasome regulatory subunit 6A homolog B (RPT5B) from Arabidopsis thaliana (Mouse-ear cress).